Here is a 702-residue protein sequence, read N- to C-terminus: Polyribonucleotide nucleotidyltransferase 2 (702 aa).

Mg(2+)-binding residues include Asp-483 and Asp-489. Residues 550-609 (PQVTKLKVHPDKVREVIGAGGKVINKIIDETGVKINIENDGTIYIAAPDQESARVALEMI) form the KH domain. In terms of domain architecture, S1 motif spans 619-687 (GEVYTGKVIK…PQGKIGLSRK (69 aa)).

This sequence belongs to the polyribonucleotide nucleotidyltransferase family. It depends on Mg(2+) as a cofactor.

It localises to the cytoplasm. The catalysed reaction is RNA(n+1) + phosphate = RNA(n) + a ribonucleoside 5'-diphosphate. Its function is as follows. Involved in mRNA degradation. Catalyzes the phosphorolysis of single-stranded polyribonucleotides processively in the 3'- to 5'-direction. This is Polyribonucleotide nucleotidyltransferase 2 from Alkaliphilus metalliredigens (strain QYMF).